The sequence spans 30 residues: Photosystem I reaction center subunit XII (30 aa).

The helical transmembrane segment at 5–25 threads the bilayer; sequence SQIFFALCIALTAAVLAIGLG.

This sequence belongs to the PsaM family.

It is found in the plastid. The protein localises to the chloroplast thylakoid membrane. The polypeptide is Photosystem I reaction center subunit XII (Emiliania huxleyi (Coccolithophore)).